Reading from the N-terminus, the 150-residue chain is Large ribosomal subunit protein bL9 (150 aa).

Belongs to the bacterial ribosomal protein bL9 family.

Functionally, binds to the 23S rRNA. This chain is Large ribosomal subunit protein bL9, found in Leuconostoc mesenteroides subsp. mesenteroides (strain ATCC 8293 / DSM 20343 / BCRC 11652 / CCM 1803 / JCM 6124 / NCDO 523 / NBRC 100496 / NCIMB 8023 / NCTC 12954 / NRRL B-1118 / 37Y).